Here is a 255-residue protein sequence, read N- to C-terminus: Small ribosomal subunit protein uS2 (255 aa).

The disordered stretch occupies residues 226–255 (QGVSNEEVAAEQNIDLDEKEKSEETEATEE).

This sequence belongs to the universal ribosomal protein uS2 family.

This is Small ribosomal subunit protein uS2 from Staphylococcus aureus (strain Mu3 / ATCC 700698).